The primary structure comprises 117 residues: Large ribosomal subunit protein bL20c (117 aa).

It belongs to the bacterial ribosomal protein bL20 family.

Its subcellular location is the plastid. The protein resides in the chloroplast. Its function is as follows. Binds directly to 23S ribosomal RNA and is necessary for the in vitro assembly process of the 50S ribosomal subunit. It is not involved in the protein synthesizing functions of that subunit. The sequence is that of Large ribosomal subunit protein bL20c from Ceratophyllum demersum (Rigid hornwort).